A 64-amino-acid chain; its full sequence is Large ribosomal subunit protein bL28 (64 aa).

A disordered region spans residues 1 to 23 (MARKDQISHRGPLSGNNRSHALN).

The protein belongs to the bacterial ribosomal protein bL28 family.

This Mesomycoplasma hyopneumoniae (strain 232) (Mycoplasma hyopneumoniae) protein is Large ribosomal subunit protein bL28.